A 453-amino-acid chain; its full sequence is uncharacterized protein (453 aa).

[4Fe-4S] cluster contacts are provided by Cys74, Cys80, Cys83, and Cys162. 4 residues coordinate S-adenosyl-L-methionine: Gln286, Tyr315, Glu336, and Asp384. Residue Cys411 is the Nucleophile of the active site.

Belongs to the class I-like SAM-binding methyltransferase superfamily. RNA M5U methyltransferase family.

This is an uncharacterized protein from Staphylococcus aureus (strain COL).